The following is an 87-amino-acid chain: Small ribosomal subunit protein bS20 (87 aa).

Belongs to the bacterial ribosomal protein bS20 family.

Functionally, binds directly to 16S ribosomal RNA. This is Small ribosomal subunit protein bS20 from Sphingopyxis alaskensis (strain DSM 13593 / LMG 18877 / RB2256) (Sphingomonas alaskensis).